The sequence spans 66 residues: Phylloseptin-S6 (66 aa).

An N-terminal signal peptide occupies residues 1 to 22 (MAFLKKSLFLVLFLGLVSLSIC). Residues 23–46 (EEEKRETEEEEHDQEEDDKSEEKR) constitute a propeptide that is removed on maturation. Positions 25–44 (EKRETEEEEHDQEEDDKSEE) are disordered. Positions 30-41 (EEEEHDQEEDDK) are enriched in acidic residues. Leucine amide is present on Leu65.

Belongs to the frog skin active peptide (FSAP) family. Phylloseptin subfamily. Expressed by the skin glands.

The protein resides in the secreted. It is found in the target cell membrane. In terms of biological role, antimicrobial peptide with high activity against Gram-positive bacteria, low activity against Gram-negative bacteria, and moderate activity against fungi. Acts by causing bacterial membrane disruption inducing leakage of the intracellular content followed by cell death. It adopts an alpha-helical amphipathic structure in membrane environments. Also shows highly potent antiparasitic activity against Leishmania species. Shows moderate hemolytic activity on human erythrocytes. Is also active on human monocytes. The chain is Phylloseptin-S6 from Phyllomedusa sauvagei (Sauvage's leaf frog).